Reading from the N-terminus, the 97-residue chain is MNNLPATPSPEELMTTPVFQAPETLSPQAEEASTALIAVVITVVFLTLLSVVTLIFFHLYKNKGSYVTYEPAEGEPSAILQMETDSAKGREKEEYFI.

The Extracellular portion of the chain corresponds to 1–36 (MNNLPATPSPEELMTTPVFQAPETLSPQAEEASTAL). Residue T7 is glycosylated (O-linked (GalNAc...) threonine). The O-linked (GalNAc...) serine glycan is linked to S9. T15, T16, and T24 each carry an O-linked (GalNAc...) threonine glycan. S26 carries O-linked (GalNAc...) serine glycosylation. The chain crosses the membrane as a helical; Signal-anchor for type III membrane protein span at residues 37–57 (IAVVITVVFLTLLSVVTLIFF). Topologically, residues 58 to 97 (HLYKNKGSYVTYEPAEGEPSAILQMETDSAKGREKEEYFI) are cytoplasmic.

It belongs to the SMAGP family. O-glycosylated. The O-glycan is modified with sialic acid residues.

The protein localises to the cell membrane. Its subcellular location is the cytoplasmic vesicle membrane. May play a role in epithelial cell-cell contacts. May play a role in tumor invasiveness and metastasis formation. The chain is Small cell adhesion glycoprotein (Smagp) from Mus musculus (Mouse).